The sequence spans 313 residues: 1-phosphofructokinase (313 aa).

ATP-binding positions include 222 to 227 (SMGAKG) and 254 to 255 (GD). D255 serves as the catalytic Proton acceptor.

The protein belongs to the carbohydrate kinase PfkB family.

It catalyses the reaction beta-D-fructose 1-phosphate + ATP = beta-D-fructose 1,6-bisphosphate + ADP + H(+). Functionally, catalyzes the ATP-dependent phosphorylation of fructose-l-phosphate to fructose-l,6-bisphosphate. This is 1-phosphofructokinase (fruK) from Haemophilus influenzae (strain ATCC 51907 / DSM 11121 / KW20 / Rd).